A 141-amino-acid polypeptide reads, in one-letter code: Hemoglobin subunit alpha-A (141 aa).

Residues 1–141 (MLSASDKANV…VGLVLTAKYR (141 aa)) form the Globin domain. His58 lines the O2 pocket. His87 serves as a coordination point for heme b.

This sequence belongs to the globin family. As to quaternary structure, there are three forms of hemoglobin in Sphenodon: A, A' and D. Hb A is a tetramer of two alpha-A and two beta-1, Hb A' is a tetramer of two alpha-a and two beta-2, Hb D is a tetramer of two alpha-D and two beta-2. Red blood cells.

Its function is as follows. Involved in oxygen transport from the lung to the various peripheral tissues. This chain is Hemoglobin subunit alpha-A (HBAA), found in Sphenodon punctatus (Tuatara).